A 266-amino-acid chain; its full sequence is Glucosamine-6-phosphate deaminase (266 aa).

The active-site Proton acceptor; for enolization step is D72. D141 (for ring-opening step) is an active-site residue. The active-site Proton acceptor; for ring-opening step is the H143. Catalysis depends on E148, which acts as the For ring-opening step.

Belongs to the glucosamine/galactosamine-6-phosphate isomerase family. NagB subfamily. In terms of assembly, homohexamer.

The enzyme catalyses alpha-D-glucosamine 6-phosphate + H2O = beta-D-fructose 6-phosphate + NH4(+). It participates in amino-sugar metabolism; N-acetylneuraminate degradation; D-fructose 6-phosphate from N-acetylneuraminate: step 5/5. Its activity is regulated as follows. Allosterically activated by N-acetylglucosamine 6-phosphate (GlcNAc6P). In terms of biological role, catalyzes the reversible isomerization-deamination of glucosamine 6-phosphate (GlcN6P) to form fructose 6-phosphate (Fru6P) and ammonium ion. The chain is Glucosamine-6-phosphate deaminase from Pectobacterium carotovorum subsp. carotovorum (strain PC1).